The primary structure comprises 368 residues: Somatostatin receptor type 5 (368 aa).

Residues 1–45 (MEPLFPASPLTTWNTSSVVPSGSGDENGTLAGLGPSPGARAVVVP) lie on the Extracellular side of the membrane. Asn-14 and Asn-27 each carry an N-linked (GlcNAc...) asparagine glycan. Residues 46 to 66 (VLYLLVCAVGLGGNTLVIYVV) traverse the membrane as a helical segment. Residues 67–77 (LRHAKMKTVTN) lie on the Cytoplasmic side of the membrane. The helical transmembrane segment at 78 to 98 (IYILNLAVADVLLMLGLPFVA) threads the bilayer. The Extracellular segment spans residues 99 to 115 (TQNAISYWPFGPVLCRL). A disulfide bridge links Cys-113 with Cys-188. A helical membrane pass occupies residues 116–136 (VMTLDGINQFTSIFCLTVMSV). Topologically, residues 137-158 (DRYLAVVHPIRSARWRRPRVAK) are cytoplasmic. The chain crosses the membrane as a helical span at residues 159-179 (LASAAVWAFSLVMSLPLVVFA). Residues 180–207 (DIQEGWNTCNLSWPEPVGLWGAVFIIYT) lie on the Extracellular side of the membrane. N-linked (GlcNAc...) asparagine glycosylation is present at Asn-189. Residues 208–228 (SVLGFFGPLLVICLCYLLIVV) traverse the membrane as a helical segment. Residues 229 to 251 (KLKASGVRVGSTRRRSERKVTRM) lie on the Cytoplasmic side of the membrane. A helical transmembrane segment spans residues 252–272 (VVVVVLVFAGCWLPFFIVNIV). The Extracellular portion of the chain corresponds to 273 to 286 (NLAFALPEEPASAG). A helical membrane pass occupies residues 287 to 309 (AYFFVVVLSYANSCANPLLYGFL). The Cytoplasmic segment spans residues 310 to 368 (SDNFRQSFRKVLCLRKGYGAGAEDADATEPQPGPSSRLQEAMMPVRSCKANGLMQTSKL). Cys-322 carries the S-palmitoyl cysteine; by ZDHHC5 lipid modification.

Belongs to the G-protein coupled receptor 1 family. In terms of assembly, heterodimer with SSTR2. Heterodimerization with SSTR2 increases cell growth inhibition activity of SSTR2. Palmitoylated by ZDHHC5, but not ZDHHC3, nor ZDHHC8. Palmitoylation creates an additional intracellular loop which is thought to be important for efficient coupling to G-proteins and may target the protein to lipid rafts.

Its subcellular location is the cell membrane. Its function is as follows. Receptor for somatostatin 28 and to a lesser extent for somatostatin-14. The activity of this receptor is mediated by G proteins which inhibit adenylyl cyclase. Increases cell growth inhibition activity of SSTR2 following heterodimerization. The sequence is that of Somatostatin receptor type 5 (SSTR5) from Bos taurus (Bovine).